The chain runs to 177 residues: Large ribosomal subunit protein uL6 (177 aa).

The protein belongs to the universal ribosomal protein uL6 family. As to quaternary structure, part of the 50S ribosomal subunit.

This protein binds to the 23S rRNA, and is important in its secondary structure. It is located near the subunit interface in the base of the L7/L12 stalk, and near the tRNA binding site of the peptidyltransferase center. This chain is Large ribosomal subunit protein uL6, found in Paramagnetospirillum magneticum (strain ATCC 700264 / AMB-1) (Magnetospirillum magneticum).